Consider the following 444-residue polypeptide: tRNA modification GTPase MnmE (444 aa).

(6S)-5-formyl-5,6,7,8-tetrahydrofolate is bound by residues R24, E81, and K121. Residues 218-368 enclose the TrmE-type G domain; the sequence is GLTVVIAGPP…LLDALVGFAR (151 aa). GTP contacts are provided by residues 228–233, 247–253, 272–275, and 349–351; these read NAGKST, SPQAGTT, DTAG, and SAR. The Mg(2+) site is built by S232 and T253. K444 serves as a coordination point for (6S)-5-formyl-5,6,7,8-tetrahydrofolate.

Belongs to the TRAFAC class TrmE-Era-EngA-EngB-Septin-like GTPase superfamily. TrmE GTPase family. As to quaternary structure, homodimer. Heterotetramer of two MnmE and two MnmG subunits. It depends on K(+) as a cofactor.

It localises to the cytoplasm. Its function is as follows. Exhibits a very high intrinsic GTPase hydrolysis rate. Involved in the addition of a carboxymethylaminomethyl (cmnm) group at the wobble position (U34) of certain tRNAs, forming tRNA-cmnm(5)s(2)U34. This Bradyrhizobium sp. (strain ORS 278) protein is tRNA modification GTPase MnmE.